A 405-amino-acid polypeptide reads, in one-letter code: Formin-like protein 15a (405 aa).

The tract at residues 1–31 (MSLVEISGSDAMAAPMPGRVPPPPPRPPPMP) is disordered. A compositionally biased stretch (pro residues) spans 18 to 31 (GRVPPPPPRPPPMP). One can recognise an FH2 domain in the interval 52–405 (FPRPAKKRAS…VCWFFVRLMI (354 aa)).

It belongs to the formin-like family. Class-II subfamily.

This Arabidopsis thaliana (Mouse-ear cress) protein is Formin-like protein 15a (FH15A).